A 166-amino-acid chain; its full sequence is ATP synthase subunit b (166 aa).

Residues 7-27 traverse the membrane as a helical segment; the sequence is QFSLGLFILQIILFVGLILLL.

It belongs to the ATPase B chain family. As to quaternary structure, F-type ATPases have 2 components, F(1) - the catalytic core - and F(0) - the membrane proton channel. F(1) has five subunits: alpha(3), beta(3), gamma(1), delta(1), epsilon(1). F(0) has three main subunits: a(1), b(2) and c(10-14). The alpha and beta chains form an alternating ring which encloses part of the gamma chain. F(1) is attached to F(0) by a central stalk formed by the gamma and epsilon chains, while a peripheral stalk is formed by the delta and b chains.

The protein resides in the cell inner membrane. In terms of biological role, f(1)F(0) ATP synthase produces ATP from ADP in the presence of a proton or sodium gradient. F-type ATPases consist of two structural domains, F(1) containing the extramembraneous catalytic core and F(0) containing the membrane proton channel, linked together by a central stalk and a peripheral stalk. During catalysis, ATP synthesis in the catalytic domain of F(1) is coupled via a rotary mechanism of the central stalk subunits to proton translocation. Functionally, component of the F(0) channel, it forms part of the peripheral stalk, linking F(1) to F(0). In Flavobacterium psychrophilum (strain ATCC 49511 / DSM 21280 / CIP 103535 / JIP02/86), this protein is ATP synthase subunit b.